The following is a 214-amino-acid chain: Probable nicotinate-nucleotide adenylyltransferase (214 aa).

It belongs to the NadD family.

It carries out the reaction nicotinate beta-D-ribonucleotide + ATP + H(+) = deamido-NAD(+) + diphosphate. It participates in cofactor biosynthesis; NAD(+) biosynthesis; deamido-NAD(+) from nicotinate D-ribonucleotide: step 1/1. In terms of biological role, catalyzes the reversible adenylation of nicotinate mononucleotide (NaMN) to nicotinic acid adenine dinucleotide (NaAD). In Mycobacterium tuberculosis (strain ATCC 25177 / H37Ra), this protein is Probable nicotinate-nucleotide adenylyltransferase.